The sequence spans 248 residues: Ribonuclease PH (248 aa).

Phosphate is bound by residues arginine 86 and 124–126; that span reads GTR.

This sequence belongs to the RNase PH family. In terms of assembly, homohexameric ring arranged as a trimer of dimers.

The catalysed reaction is tRNA(n+1) + phosphate = tRNA(n) + a ribonucleoside 5'-diphosphate. Functionally, phosphorolytic 3'-5' exoribonuclease that plays an important role in tRNA 3'-end maturation. Removes nucleotide residues following the 3'-CCA terminus of tRNAs; can also add nucleotides to the ends of RNA molecules by using nucleoside diphosphates as substrates, but this may not be physiologically important. Probably plays a role in initiation of 16S rRNA degradation (leading to ribosome degradation) during starvation. The sequence is that of Ribonuclease PH from Clostridium kluyveri (strain NBRC 12016).